A 453-amino-acid chain; its full sequence is Probable exopolygalacturonase B (453 aa).

An N-terminal signal peptide occupies residues 1 to 16; the sequence is MKFFALAALFASTVNS. Asn185 and Asn225 each carry an N-linked (GlcNAc...) asparagine glycan. The active-site Proton donor is Asp255. Cys257 and Cys274 form a disulfide bridge. 2 N-linked (GlcNAc...) asparagine glycosylation sites follow: Asn263 and Asn275. His278 is an active-site residue. PbH1 repeat units lie at residues 295–316 and 327–348; these read IENV…RLKA and INNV…VLDQ. Residues Asn302, Asn329, Asn354, and Asn366 are each glycosylated (N-linked (GlcNAc...) asparagine). A PbH1 3 repeat occupies 362-405; it reads PSRVNFTNIVFEDIYGTSSGKRGKVVADLTCSPNAVCSGIRLKN. Cys392 and Cys398 are disulfide-bonded. Asn436 carries N-linked (GlcNAc...) asparagine glycosylation.

Belongs to the glycosyl hydrolase 28 family.

The protein localises to the secreted. It catalyses the reaction [(1-&gt;4)-alpha-D-galacturonosyl](n) + H2O = alpha-D-galacturonate + [(1-&gt;4)-alpha-D-galacturonosyl](n-1). Specific in hydrolyzing the terminal glycosidic bond of polygalacturonic acid and oligogalacturonates. The protein is Probable exopolygalacturonase B (pgxB) of Aspergillus fumigatus (strain ATCC MYA-4609 / CBS 101355 / FGSC A1100 / Af293) (Neosartorya fumigata).